Reading from the N-terminus, the 529-residue chain is Plexin domain-containing protein 2 (529 aa).

A signal peptide spans 1-30 (MARFPKADLAAAGVMLLCHFFTDQFQFADG). Over 31–454 (KPGDQILDWQ…AEKKGGTLHA (424 aa)) the chain is Extracellular. The segment at 80–104 (ASVGQDSPEPRSFTDLLLDDGQDNN) is disordered. Residues asparagine 103 and asparagine 160 are each glycosylated (N-linked (GlcNAc...) asparagine). The PSI domain maps to 327-372 (TCLQFNRCGPCVSSQIGFNCSWCSKLQRCSSGFDRHRQDWVDSGCP). A helical transmembrane segment spans residues 455–475 (GLIIGILILVLIVATAILVTV). Residues 476–529 (YMYHHPTSAASIFFIERRPSRWPAMKFRRGSGHPAYAEVEPVGEKEGFIVSEQC) are Cytoplasmic-facing. Serine 506 is modified (phosphoserine).

It belongs to the plexin family. In terms of assembly, interacts with CTTN. As to expression, expressed in the endothelial cells of the stroma but not in the endothelial cells of normal colonic tissue.

The protein localises to the membrane. May play a role in tumor angiogenesis. This is Plexin domain-containing protein 2 (PLXDC2) from Homo sapiens (Human).